The sequence spans 376 residues: 26S proteasome non-ATPase regulatory subunit 13 (376 aa).

Residues Ser171–Pro338 form the PCI domain. Lys298 is subject to N6-acetyllysine.

This sequence belongs to the proteasome subunit S11 family. Component of the 19S proteasome regulatory particle complex. The 26S proteasome consists of a 20S core particle (CP) and two 19S regulatory subunits (RP). The regulatory particle is made of a lid composed of 9 subunits including PSMD13, a base containing 6 ATPases and few additional components.

Functionally, component of the 26S proteasome, a multiprotein complex involved in the ATP-dependent degradation of ubiquitinated proteins. This complex plays a key role in the maintenance of protein homeostasis by removing misfolded or damaged proteins, which could impair cellular functions, and by removing proteins whose functions are no longer required. Therefore, the proteasome participates in numerous cellular processes, including cell cycle progression, apoptosis, or DNA damage repair. This Homo sapiens (Human) protein is 26S proteasome non-ATPase regulatory subunit 13 (PSMD13).